The chain runs to 835 residues: Cap-specific mRNA (nucleoside-2'-O-)-methyltransferase 1 (835 aa).

Residues 2–19 (RRRNDPECTAPIKKQKKR) carry the Bipartite nuclear localization signal motif. Residues 24 to 68 (ALNLSAASGDEPPSSVNHAAKASTTSLSGSDSETEGKQHGSDSFD) are disordered. 5 positions are modified to phosphoserine: Ser28, Ser31, Ser53, Ser66, and Ser91. Over residues 37-54 (SSVNHAAKASTTSLSGSD) the composition is skewed to polar residues. The span at 57–68 (TEGKQHGSDSFD) shows a compositional bias: basic and acidic residues. The G-patch domain occupies 87–133 (YNSVSQKLMAKMGFREGEGLGKYSQGRKDIVEASNQKGRRGLGLTLQ). Lys108 carries the post-translational modification N6-acetyllysine. Substrate-binding positions include 203–207 (KSVFD) and Arg218. The region spanning 231 to 450 (FFLNRAAMKM…ERYVVCKGLK (220 aa)) is the RrmJ-type SAM-dependent 2'-O-MTase domain. Asn234 serves as a coordination point for S-adenosyl-L-methionine. Lys239 is a catalytic residue. S-adenosyl-L-methionine is bound by residues 277-283 (CAGPGGF) and 335-336 (DI). Asp364 is an active-site residue. Residue 374–376 (NLQ) participates in substrate binding. Lys404 acts as the Proton acceptor in catalysis. Asn439 provides a ligand contact to substrate. The tract at residues 727–835 (SSGTPKLSYT…VLSFIQTHSA (109 aa)) is interaction with POLR2A. The WW domain maps to 752 to 786 (RTVNEPWTMGFSKSFKRKFFYNKKTKISTFDLPAD).

Interacts with POLR2A (via C-terminus).

The protein localises to the nucleus. It carries out the reaction a 5'-end (N(7)-methyl 5'-triphosphoguanosine)-ribonucleoside in mRNA + S-adenosyl-L-methionine = a 5'-end (N(7)-methyl 5'-triphosphoguanosine)-(2'-O-methyl-ribonucleoside) in mRNA + S-adenosyl-L-homocysteine + H(+). S-adenosyl-L-methionine-dependent methyltransferase that mediates mRNA cap1 2'-O-ribose methylation to the 5'-cap structure of mRNAs. Methylates the ribose of the first nucleotide of a m(7)GpppG-capped mRNA and small nuclear RNA (snRNA) to produce m(7)GpppRm (cap1). Displays a preference for cap0 transcripts. Cap1 modification is linked to higher levels of translation. May be involved in the interferon response pathway. The sequence is that of Cap-specific mRNA (nucleoside-2'-O-)-methyltransferase 1 (CMTR1) from Ailuropoda melanoleuca (Giant panda).